A 137-amino-acid polypeptide reads, in one-letter code: MGENEGIDKSFLDTVKFDDRGLIPAIVQDHETGKVLMMAWMNRESLEMTLERKKACYWSRSRNKLWLKGESSGNMQEVFDILIDCDGDTLILKVSQIGGACHVGYHSCFYRKVNEDGSMQICDTLMFNPEEVYGKKH.

Asp-84 is a Mg(2+) binding site. Residue Cys-85 coordinates Zn(2+). Mg(2+) is bound by residues Asp-86 and Asp-88. Cys-101 and Cys-108 together coordinate Zn(2+).

It belongs to the PRA-CH family. As to quaternary structure, homodimer. It depends on Mg(2+) as a cofactor. Requires Zn(2+) as cofactor.

It is found in the cytoplasm. The catalysed reaction is 1-(5-phospho-beta-D-ribosyl)-5'-AMP + H2O = 1-(5-phospho-beta-D-ribosyl)-5-[(5-phospho-beta-D-ribosylamino)methylideneamino]imidazole-4-carboxamide. The protein operates within amino-acid biosynthesis; L-histidine biosynthesis; L-histidine from 5-phospho-alpha-D-ribose 1-diphosphate: step 3/9. Functionally, catalyzes the hydrolysis of the adenine ring of phosphoribosyl-AMP. In Chlorobium phaeovibrioides (strain DSM 265 / 1930) (Prosthecochloris vibrioformis (strain DSM 265)), this protein is Phosphoribosyl-AMP cyclohydrolase.